A 489-amino-acid chain; its full sequence is Ubiquitin carboxyl-terminal hydrolase 14 (489 aa).

Positions 102–458 (CGLANLGNTC…SAYVLLYEAR (357 aa)) constitute a USP domain. Cys111 (nucleophile) is an active-site residue. His409 (proton acceptor) is an active-site residue. Residues 467 to 489 (PPAPVPTEVAADTAEPMEVSEKQ) form a disordered region.

Belongs to the peptidase C19 family. USP14/UBP6 subfamily.

The enzyme catalyses Thiol-dependent hydrolysis of ester, thioester, amide, peptide and isopeptide bonds formed by the C-terminal Gly of ubiquitin (a 76-residue protein attached to proteins as an intracellular targeting signal).. In terms of biological role, proteasome-associated deubiquitinase which releases ubiquitin from the proteasome targeted ubiquitinated proteins. Ensures the regeneration of ubiquitin at the proteasome. The sequence is that of Ubiquitin carboxyl-terminal hydrolase 14 (usp-14) from Caenorhabditis elegans.